A 352-amino-acid chain; its full sequence is Pyruvate dehydrogenase E1 component subunit beta, mitochondrial (352 aa).

The N-terminal 21 residues, Met1–Ala21, are a transit peptide targeting the mitochondrion. Glu81 lines the thiamine diphosphate pocket. Residues Ile134, Ala182, Ile183, Asp185, and Asn187 each coordinate K(+).

In terms of assembly, tetramer of 2 alpha and 2 beta subunits. It depends on thiamine diphosphate as a cofactor.

The protein localises to the mitochondrion matrix. It catalyses the reaction N(6)-[(R)-lipoyl]-L-lysyl-[protein] + pyruvate + H(+) = N(6)-[(R)-S(8)-acetyldihydrolipoyl]-L-lysyl-[protein] + CO2. Its function is as follows. The pyruvate dehydrogenase complex catalyzes the overall conversion of pyruvate to acetyl-CoA and CO(2). It contains multiple copies of three enzymatic components: pyruvate dehydrogenase (E1), dihydrolipoamide acetyltransferase (E2) and lipoamide dehydrogenase (E3). The chain is Pyruvate dehydrogenase E1 component subunit beta, mitochondrial (pdhb-1) from Caenorhabditis elegans.